The primary structure comprises 248 residues: UDP-2,3-diacylglucosamine hydrolase (248 aa).

Mn(2+)-binding residues include D7, H9, D40, N78, and H113. 78 to 79 contacts substrate; that stretch reads NR. Positions 121, 159, 163, 166, and 194 each coordinate substrate. The Mn(2+) site is built by H194 and H196.

This sequence belongs to the LpxH family. Mn(2+) is required as a cofactor.

It localises to the cell inner membrane. The catalysed reaction is UDP-2-N,3-O-bis[(3R)-3-hydroxytetradecanoyl]-alpha-D-glucosamine + H2O = 2-N,3-O-bis[(3R)-3-hydroxytetradecanoyl]-alpha-D-glucosaminyl 1-phosphate + UMP + 2 H(+). The protein operates within glycolipid biosynthesis; lipid IV(A) biosynthesis; lipid IV(A) from (3R)-3-hydroxytetradecanoyl-[acyl-carrier-protein] and UDP-N-acetyl-alpha-D-glucosamine: step 4/6. Hydrolyzes the pyrophosphate bond of UDP-2,3-diacylglucosamine to yield 2,3-diacylglucosamine 1-phosphate (lipid X) and UMP by catalyzing the attack of water at the alpha-P atom. Involved in the biosynthesis of lipid A, a phosphorylated glycolipid that anchors the lipopolysaccharide to the outer membrane of the cell. This Pseudomonas syringae pv. tomato (strain ATCC BAA-871 / DC3000) protein is UDP-2,3-diacylglucosamine hydrolase.